The primary structure comprises 237 residues: Demethylmenaquinone methyltransferase (237 aa).

S-adenosyl-L-methionine is bound by residues T58, D79, and 106-107; that span reads NA.

It belongs to the class I-like SAM-binding methyltransferase superfamily. MenG/UbiE family.

The catalysed reaction is a 2-demethylmenaquinol + S-adenosyl-L-methionine = a menaquinol + S-adenosyl-L-homocysteine + H(+). It functions in the pathway quinol/quinone metabolism; menaquinone biosynthesis; menaquinol from 1,4-dihydroxy-2-naphthoate: step 2/2. Its function is as follows. Methyltransferase required for the conversion of demethylmenaquinol (DMKH2) to menaquinol (MKH2). This chain is Demethylmenaquinone methyltransferase, found in Listeria monocytogenes serotype 4a (strain HCC23).